Consider the following 186-residue polypeptide: Mating-type-like protein ALPHA2 (186 aa).

A DNA-binding region (homeobox; TALE-type) is located at residues lysine 112–lysine 174.

It belongs to the TALE/M-ATYP homeobox family. Forms a heterodimer with A1.

The protein localises to the nucleus. Functionally, mating type proteins are sequence specific DNA-binding proteins that act as master switches in yeast differentiation by controlling gene expression in a cell type-specific fashion. Transcriptional corepressor that acts in conjunction with A1 to repress transcription both of homozygote-specific genes and of genes necessary for the white-opaque switch, a prerequisite for mating. This chain is Mating-type-like protein ALPHA2 (MTLALPHA2), found in Candida albicans (strain SC5314 / ATCC MYA-2876) (Yeast).